The sequence spans 839 residues: Toll-like receptor 4 (839 aa).

The signal sequence occupies residues 1–23; the sequence is MMSASRLAGTLIPAMAFLSCVRP. At 24–631 the chain is on the extracellular side; it reads ESWEPCVEVV…SLNITCQMNK (608 aa). A disulfide bond links Cys-29 and Cys-40. Residue Asn-35 is glycosylated (N-linked (GlcNAc...) asparagine). 5 LRR repeats span residues 55–76, 79–100, 103–124, 127–148, and 151–172; these read STKN…SFFS, ELQV…AYQS, HLST…AFSG, SLQK…PIGH, and TLKE…EYFS. Asn-173 carries an N-linked (GlcNAc...) asparagine glycan. LRR repeat units lie at residues 176-199, 205-225, and 227-247; these read NLEH…RVLH, NLSL…AFKE, and RLHK…KTCI. Asn-205 carries an N-linked (GlcNAc...) asparagine glycan. Cys-281 and Cys-306 are joined by a disulfide. Residues Asn-282 and Asn-309 are each glycosylated (N-linked (GlcNAc...) asparagine). LRR repeat units lie at residues 331-351, 352-373, 374-394, 400-422, 423-444, 448-456, 472-495, 497-518, 521-542, and 545-565; these read GWQH…LKLK, SLKR…VDLP, SLEF…CSQS, SLKY…LGLE, QLEH…SVFL, NLIYLDISH, SLEV…FTEL, NLTF…AFNS, SLQV…PYKC, and SLQV…QELQ. Cysteines 390 and 391 form a disulfide. N-linked (GlcNAc...) asparagine glycans are attached at residues Asn-497 and Asn-526. Residue Asn-575 is glycosylated (N-linked (GlcNAc...) asparagine). The region spanning 579-629 is the LRRCT domain; that stretch reads NDFACTCEHQSFLQWIKDQRQLLVEVERMECATPSDKQGMPVLSLNITCQM. 2 cysteine pairs are disulfide-bonded: Cys-583/Cys-609 and Cys-585/Cys-627. Residues Asn-624 and Asn-630 are each glycosylated (N-linked (GlcNAc...) asparagine). The helical transmembrane segment at 632–652 threads the bilayer; sequence TIIGVSVLSVLVVSVVAVLVY. Topologically, residues 653-839 are cytoplasmic; that stretch reads KFYFHLMLLA…GCNWQEATSI (187 aa). Positions 672-815 constitute a TIR domain; that stretch reads NIYDAFVIYS…IFWRRLRKAL (144 aa).

It belongs to the Toll-like receptor family. Belongs to the lipopolysaccharide (LPS) receptor, a multi-protein complex containing at least CD14, LY96 and TLR4. Binding to bacterial LPS leads to homodimerization. Interacts with LY96 via the extracellular domain. Interacts with MYD88 and TIRAP via their respective TIR domains. Interacts with NOX4. Interacts with CNPY3 and HSP90B1; this interaction is required for proper folding in the endoplasmic reticulum. Interacts with MAP3K21; this interaction leads to negative regulation of TLR4 signaling. Interacts with CD36, following CD36 stimulation by oxLDL or amyloid-beta 42, and forms a heterodimer with TLR6. The trimeric complex is internalized and triggers inflammatory response. LYN kinase activity facilitates TLR4-TLR6 heterodimerization and signal initiation. Interacts with TICAM1 in response to LPS in a WDFY1-dependent manner. Interacts with WDFY1 in response to LPS. Interacts with SMPDL3B. Interacts with CEACAM1; upon lipopolysaccharide stimulation, forms a complex including TLR4 and the phosphorylated form of SYK and CEACAM1, which in turn, recruits PTPN6 that dephosphorylates SYK, reducing the production of reactive oxygen species (ROS) and lysosome disruption, which in turn, reduces the activity of the inflammasome. Interacts with RFTN1; the interaction occurs in response to lipopolysaccharide stimulation. Interacts with SCIMP; the interaction occurs in response to lipopolysaccharide stimulation and is enhanced by phosphorylation of SCIMP by LYN. This interaction facilitates the phosphorylation of TLR4 by LYN which elicits a selective cytokine response in macrophages. Interacts with TRAF3IP3. Interacts with TREM1; this interaction enhances TLR4-mediated inflammatory response. Interacts with ZG16B/PAUF. Interacts with CD82; this interaction inhibits TLR4-mediated signaling pathway. In terms of processing, phosphorylated on tyrosine residues by LYN after binding lipopolysaccharide. Ubiquitinated by RNF128 via 'Lys-28'-linked polyubiquitin chains, leading to proteasomal degradation.

The protein resides in the cell membrane. The protein localises to the early endosome. It localises to the cell projection. Its subcellular location is the ruffle. In terms of biological role, transmembrane receptor that functions as a pattern recognition receptor recognizing pathogen- and damage-associated molecular patterns (PAMPs and DAMPs) to induce innate immune responses via downstream signaling pathways. At the plasma membrane, cooperates with LY96 to mediate the innate immune response to bacterial lipopolysaccharide (LPS). Also involved in LPS-independent inflammatory responses triggered by free fatty acids, such as palmitate, and Ni(2+). Mechanistically, acts via MYD88, TIRAP and TRAF6, leading to NF-kappa-B activation, cytokine secretion and the inflammatory response. Alternatively, CD14-mediated TLR4 internalization via endocytosis is associated with the initiation of a MYD88-independent signaling via the TICAM1-TBK1-IRF3 axis leading to type I interferon production. In addition to the secretion of proinflammatory cytokines, initiates the activation of NLRP3 inflammasome and formation of a positive feedback loop between autophagy and NF-kappa-B signaling cascade. In complex with TLR6, promotes inflammation in monocytes/macrophages by associating with TLR6 and the receptor CD86. Upon ligand binding, such as oxLDL or amyloid-beta 42, the TLR4:TLR6 complex is internalized and triggers inflammatory response, leading to NF-kappa-B-dependent production of CXCL1, CXCL2 and CCL9 cytokines, via MYD88 signaling pathway, and CCL5 cytokine, via TICAM1 signaling pathway. In myeloid dendritic cells, vesicular stomatitis virus glycoprotein G but not LPS promotes the activation of IRF7, leading to type I IFN production in a CD14-dependent manner. This is Toll-like receptor 4 (TLR4) from Pan paniscus (Pygmy chimpanzee).